A 221-amino-acid chain; its full sequence is MKFYRDHTWPSTLEEAIVIQEKLRDQVITEDQLEEPIQYVAGVDMGFEADGTISRAAVAVLSFPDLQVIETSLAHRPTTFPYVPGFLSFREIPAVLDALEKIQTTPNIILCDGQGIAHPRRLGIASHLGLLIDMPTIGVAKSRLVGKYEELAETKGSSQPLIYNGETVGVVLRSRTGVKPLYISSGHRISLPTAIDYVLRCTPKYRLPETTRIADKLASAK.

2 residues coordinate Mg(2+): D44 and D112.

The protein belongs to the endonuclease V family. Mg(2+) is required as a cofactor.

The protein localises to the cytoplasm. The enzyme catalyses Endonucleolytic cleavage at apurinic or apyrimidinic sites to products with a 5'-phosphate.. Its function is as follows. DNA repair enzyme involved in the repair of deaminated bases. Selectively cleaves double-stranded DNA at the second phosphodiester bond 3' to a deoxyinosine leaving behind the intact lesion on the nicked DNA. The protein is Endonuclease V of Nostoc punctiforme (strain ATCC 29133 / PCC 73102).